A 331-amino-acid chain; its full sequence is Protein FLX-like 1 (331 aa).

The segment at 1–51 (MSGRNRGPPPPSMKGGSYSGLQAPVHQPPFVRGLGGGPVPPPPHPSMIDDS) is disordered. Positions 69-252 (ILEDRLAAQN…AEIANSETSA (184 aa)) form a coiled coil. Residues 306–321 (QAAWAGGYDPQQQQQQ) are compositionally biased toward low complexity. A disordered region spans residues 306 to 331 (QAAWAGGYDPQQQQQQQPPPQGQGHR). Positions 322-331 (QPPPQGQGHR) are enriched in pro residues.

This sequence belongs to the FLX family. In terms of assembly, interacts with FRI.

Has no transcriptional activation activity. The polypeptide is Protein FLX-like 1 (FLXL1) (Arabidopsis thaliana (Mouse-ear cress)).